Reading from the N-terminus, the 347-residue chain is Probable RNA methyltransferase Lcho_2507 (347 aa).

Glutamate 89 functions as the Proton acceptor in the catalytic mechanism. In terms of domain architecture, Radical SAM core spans leucine 92–aspartate 318. Residues cysteine 99 and cysteine 323 are joined by a disulfide bond. 3 residues coordinate [4Fe-4S] cluster: cysteine 106, cysteine 110, and cysteine 113. S-adenosyl-L-methionine contacts are provided by residues glycine 151 to glutamate 152, serine 181, serine 204 to histidine 206, and asparagine 280. Residue cysteine 323 is the S-methylcysteine intermediate of the active site.

It belongs to the radical SAM superfamily. RlmN family. [4Fe-4S] cluster is required as a cofactor.

The protein resides in the cytoplasm. The chain is Probable RNA methyltransferase Lcho_2507 from Leptothrix cholodnii (strain ATCC 51168 / LMG 8142 / SP-6) (Leptothrix discophora (strain SP-6)).